Consider the following 350-residue polypeptide: Beta-ketoacyl-[acyl-carrier-protein] synthase III (350 aa).

Active-site residues include Cys-120 and His-256. Residues Gln-257–Arg-261 form an ACP-binding region. Asn-286 is an active-site residue.

This sequence belongs to the thiolase-like superfamily. FabH family. In terms of assembly, homodimer.

The protein localises to the cytoplasm. The catalysed reaction is malonyl-[ACP] + acetyl-CoA + H(+) = 3-oxobutanoyl-[ACP] + CO2 + CoA. The protein operates within lipid metabolism; fatty acid biosynthesis. Functionally, catalyzes the condensation reaction of fatty acid synthesis by the addition to an acyl acceptor of two carbons from malonyl-ACP. Catalyzes the first condensation reaction which initiates fatty acid synthesis and may therefore play a role in governing the total rate of fatty acid production. Possesses both acetoacetyl-ACP synthase and acetyl transacylase activities. Its substrate specificity determines the biosynthesis of branched-chain and/or straight-chain of fatty acids. The protein is Beta-ketoacyl-[acyl-carrier-protein] synthase III of Deinococcus deserti (strain DSM 17065 / CIP 109153 / LMG 22923 / VCD115).